The following is a 446-amino-acid chain: Probable glycine dehydrogenase (decarboxylating) subunit 1 (446 aa).

Belongs to the GcvP family. N-terminal subunit subfamily. In terms of assembly, the glycine cleavage system is composed of four proteins: P, T, L and H. In this organism, the P 'protein' is a heterodimer of two subunits.

The catalysed reaction is N(6)-[(R)-lipoyl]-L-lysyl-[glycine-cleavage complex H protein] + glycine + H(+) = N(6)-[(R)-S(8)-aminomethyldihydrolipoyl]-L-lysyl-[glycine-cleavage complex H protein] + CO2. Functionally, the glycine cleavage system catalyzes the degradation of glycine. The P protein binds the alpha-amino group of glycine through its pyridoxal phosphate cofactor; CO(2) is released and the remaining methylamine moiety is then transferred to the lipoamide cofactor of the H protein. The sequence is that of Probable glycine dehydrogenase (decarboxylating) subunit 1 from Protochlamydia amoebophila (strain UWE25).